A 396-amino-acid chain; its full sequence is Putative glutamate--cysteine ligase 2-2 (396 aa).

It belongs to the glutamate--cysteine ligase type 2 family. YbdK subfamily.

The catalysed reaction is L-cysteine + L-glutamate + ATP = gamma-L-glutamyl-L-cysteine + ADP + phosphate + H(+). In terms of biological role, ATP-dependent carboxylate-amine ligase which exhibits weak glutamate--cysteine ligase activity. The chain is Putative glutamate--cysteine ligase 2-2 from Mycolicibacterium smegmatis (strain ATCC 700084 / mc(2)155) (Mycobacterium smegmatis).